Here is a 295-residue protein sequence, read N- to C-terminus: Uridine and thymidine phosphorylase (295 aa).

Phosphate is bound by residues R81 and 125-128 (RLGT). Q203 and R205 together coordinate substrate.

It belongs to the PNP/UDP phosphorylase family. In terms of tissue distribution, expressed in hypodermis, pharynx, spermatheca and gonad.

It catalyses the reaction uridine + phosphate = alpha-D-ribose 1-phosphate + uracil. It carries out the reaction thymidine + phosphate = 2-deoxy-alpha-D-ribose 1-phosphate + thymine. The enzyme catalyses 2'-deoxyuridine + phosphate = 2-deoxy-alpha-D-ribose 1-phosphate + uracil. The protein operates within pyrimidine metabolism; UMP biosynthesis via salvage pathway; uracil from uridine (phosphorylase route): step 1/1. It participates in pyrimidine metabolism; dTMP biosynthesis via salvage pathway; dTMP from thymine: step 1/2. In terms of biological role, catalyzes the reversible phosphorylytic cleavage of uridine and thymidine to uracil and ribose-phosphate or thymine and deoxyribose-1-phosphate. The produced molecules are then utilized as carbon and energy sources or in the rescue of pyrimidine bases for nucleotide synthesis. Required for normal lifespan. In Caenorhabditis elegans, this protein is Uridine and thymidine phosphorylase.